Here is a 129-residue protein sequence, read N- to C-terminus: Small ribosomal subunit protein uS11 (129 aa).

It belongs to the universal ribosomal protein uS11 family. As to quaternary structure, part of the 30S ribosomal subunit. Interacts with proteins S7 and S18. Binds to IF-3.

In terms of biological role, located on the platform of the 30S subunit, it bridges several disparate RNA helices of the 16S rRNA. Forms part of the Shine-Dalgarno cleft in the 70S ribosome. This Pasteurella multocida (strain Pm70) protein is Small ribosomal subunit protein uS11.